The following is a 317-amino-acid chain: MRVLIVKTSSMGDVLHTLPALTDAQQAIPGIQFDWAVEEGFAQIPSWHSAVDRVIPVAIRRWRKAWFSAPIKAERTAFRRAVCANQYDAVIDAQGLVKSAALVTRLAHGIKHGMDWSTAREPLASLFYNRKHHIAKQQHAVERTRELFAKSLGYDKPQSQGDYAIAKHFLHCQQAVSDPYAVFLHATTRDDKHWPEANWRELIGLVGNTGLRIKLPWGAPHEEARAKRLAEGFDYVDVLPRMSLEEVARVLAGAKFVVSVDTGLSHLTAALDRPNITLYGPTDPGLIGGYGKNQMACCSPEQNLANLDATSVFGKIH.

T187, T188, K192, E222, M242, D261, T262, G263, and H266 together coordinate ADP-L-glycero-beta-D-manno-heptose.

It belongs to the glycosyltransferase 9 family.

The protein resides in the cell inner membrane. It carries out the reaction an alpha-Kdo-(2-&gt;4)-alpha-Kdo-(2-&gt;6)-lipid A + ADP-L-glycero-beta-D-manno-heptose = an L-alpha-D-Hep-(1-&gt;5)-[alpha-Kdo-(2-&gt;4)]-alpha-Kdo-(2-&gt;6)-lipid A + ADP + H(+). The protein operates within bacterial outer membrane biogenesis; LPS core biosynthesis. Glycosyltransferase involved in the biosynthesis of the core oligosaccharide region of lipopolysaccharide (LPS). Catalyzes the addition of the first heptose unit to one 3-deoxy-D-manno-octulosonic acid (Kdo) residue of the Kdo2-lipid A module. This chain is Lipopolysaccharide heptosyltransferase 1, found in Salmonella typhimurium (strain LT2 / SGSC1412 / ATCC 700720).